Consider the following 239-residue polypeptide: Large ribosomal subunit protein bL25 (239 aa).

A disordered region spans residues 217–239; it reads IKAEAHAAEGTQAEGSTEEGQQQ. Residues 229–239 are compositionally biased toward polar residues; that stretch reads AEGSTEEGQQQ.

It belongs to the bacterial ribosomal protein bL25 family. CTC subfamily. Part of the 50S ribosomal subunit; part of the 5S rRNA/L5/L18/L25 subcomplex. Contacts the 5S rRNA. Binds to the 5S rRNA independently of L5 and L18.

This is one of the proteins that binds to the 5S RNA in the ribosome where it forms part of the central protuberance. In Deinococcus deserti (strain DSM 17065 / CIP 109153 / LMG 22923 / VCD115), this protein is Large ribosomal subunit protein bL25.